The sequence spans 247 residues: MHKLVLIRHGESTWNLENRFTGWTDVDLTPTGIEQAKNAGRLLKAEGYEFDLAYTSVLKRATRTLWHCLDEMDRTWLPVEHSWRLNERHYGALQGLNKADMAKQYGDAQVLVWRRSYDTPPPALETTDPRSERGDLRYAGLQAGEVPLTECLKDTVARVLPYWNESIAPAIRSGKRVLIAAHGNSIRALVKYLDNISDQDIVGLNIPNGIPLVYELDADLKPLRHYYLGDAEAAAKAAAAVASQGKA.

Substrate contacts are provided by residues 8–15 (RHGESTWN), 21–22 (TG), Arg60, 87–90 (ERHY), Lys98, 114–115 (RR), and 183–184 (GN). His9 functions as the Tele-phosphohistidine intermediate in the catalytic mechanism. Glu87 acts as the Proton donor/acceptor in catalysis.

The protein belongs to the phosphoglycerate mutase family. BPG-dependent PGAM subfamily. As to quaternary structure, homodimer.

It carries out the reaction (2R)-2-phosphoglycerate = (2R)-3-phosphoglycerate. It participates in carbohydrate degradation; glycolysis; pyruvate from D-glyceraldehyde 3-phosphate: step 3/5. In terms of biological role, catalyzes the interconversion of 2-phosphoglycerate and 3-phosphoglycerate. In Acidovorax ebreus (strain TPSY) (Diaphorobacter sp. (strain TPSY)), this protein is 2,3-bisphosphoglycerate-dependent phosphoglycerate mutase.